We begin with the raw amino-acid sequence, 259 residues long: Adenylosuccinate synthetase (259 aa).

GTP contacts are provided by residues 3–9 (GDEGKGK) and 31–33 (GHT). Asp4 (proton acceptor) is an active-site residue. Mg(2+)-binding residues include Asp4 and Gly31. 4–7 (DEGK) lines the IMP pocket. His32 serves as the catalytic Proton donor. The IMP site is built by Thr120, Arg134, Gln215, and Thr230.

It belongs to the adenylosuccinate synthetase family. In terms of assembly, homodimer. Requires Mg(2+) as cofactor.

The protein resides in the cytoplasm. It catalyses the reaction IMP + L-aspartate + GTP = N(6)-(1,2-dicarboxyethyl)-AMP + GDP + phosphate + 2 H(+). The protein operates within purine metabolism; AMP biosynthesis via de novo pathway; AMP from IMP: step 1/2. Its function is as follows. Plays an important role in the de novo pathway of purine nucleotide biosynthesis. Catalyzes the first committed step in the biosynthesis of AMP from IMP. This chain is Adenylosuccinate synthetase, found in Aggregatibacter actinomycetemcomitans (Actinobacillus actinomycetemcomitans).